The chain runs to 52 residues: Rubredoxin (52 aa).

The 52-residue stretch at 1–52 (MKKYVCTVCGYEYDPAEGDPDNGVKPGTSFDDLPADWVCPVCGAPKSEFEAA) folds into the Rubredoxin-like domain. Fe cation contacts are provided by C6, C9, C39, and C42.

Belongs to the rubredoxin family. Fe(3+) is required as a cofactor.

It is found in the cytoplasm. In terms of biological role, rubredoxin is a small nonheme, iron protein lacking acid-labile sulfide. Its single Fe, chelated to 4 Cys, functions as an electron acceptor and may also stabilize the conformation of the molecule. Functionally, electron acceptor for cytoplasmic lactate dehydrogenase. This chain is Rubredoxin (rub), found in Nitratidesulfovibrio vulgaris (strain ATCC 29579 / DSM 644 / CCUG 34227 / NCIMB 8303 / VKM B-1760 / Hildenborough) (Desulfovibrio vulgaris).